Here is a 484-residue protein sequence, read N- to C-terminus: F-box/LRR-repeat protein At3g59210 (484 aa).

Residues 6–54 (KDIINCLPDNLLCQILSNLSTKEAALTSLLSKRWRYLFALVPNLDFDVL) form the F-box domain. LRR repeat units follow at residues 144-170 (KIGPKDGPRVKLRNVCLPKLKTLNLDS), 172-197 (VFEEGKIGFAKLLSGCPVLEELSLLN), 205-234 (SCSVSSKILKRLTLYCAHSSRNPKSVSFDT), 303-334 (TLYLSYDTLETLNLCCQVIPVFNNLTHLTIES), and 335-360 (HPELGWESLPNLLKSCPNLGTLVFQG).

This chain is F-box/LRR-repeat protein At3g59210, found in Arabidopsis thaliana (Mouse-ear cress).